The sequence spans 188 residues: uncharacterized protein (188 aa).

The N-terminal stretch at 1–23 (MFKGQKTLAALAVSLLFTAPVYA) is a signal peptide. Cysteines 42 and 81 form a disulfide.

The protein belongs to the fimbrial protein family.

Its subcellular location is the fimbrium. This is an uncharacterized protein from Escherichia coli (strain K12).